Reading from the N-terminus, the 293-residue chain is N-acetylneuraminate lyase (293 aa).

Residues Ser-48 and Ser-49 each coordinate aceneuramate. Catalysis depends on Tyr-137, which acts as the Proton donor. Lys-165 functions as the Schiff-base intermediate with substrate in the catalytic mechanism. Positions 167, 189, 191, 192, and 208 each coordinate aceneuramate.

This sequence belongs to the DapA family. NanA subfamily. In terms of assembly, homotetramer.

Its subcellular location is the cytoplasm. It catalyses the reaction aceneuramate = aldehydo-N-acetyl-D-mannosamine + pyruvate. The protein operates within amino-sugar metabolism; N-acetylneuraminate degradation; D-fructose 6-phosphate from N-acetylneuraminate: step 1/5. Catalyzes the reversible aldol cleavage of N-acetylneuraminic acid (sialic acid; Neu5Ac) to form pyruvate and N-acetylmannosamine (ManNAc) via a Schiff base intermediate. This is N-acetylneuraminate lyase from Staphylococcus carnosus (strain TM300).